The chain runs to 144 residues: uncharacterized protein (144 aa).

2 helical membrane-spanning segments follow: residues 76 to 96 (LLSALLMYVVPLLTLLIVTML) and 105 to 125 (ILRAILIFGLTALSFILVKSY).

It belongs to the RseC family.

Its subcellular location is the cell inner membrane. This is an uncharacterized protein from Haemophilus influenzae (strain ATCC 51907 / DSM 11121 / KW20 / Rd).